Reading from the N-terminus, the 126-residue chain is Fluoride-specific ion channel FluC (126 aa).

A run of 4 helical transmembrane segments spans residues 6–26 (FVAV…FAVL), 36–56 (YGTL…VGFF), 69–89 (LAIT…SEVV), and 99–119 (WAGL…AFGL). Na(+) contacts are provided by Gly76 and Thr79.

It belongs to the fluoride channel Fluc/FEX (TC 1.A.43) family.

The protein localises to the cell inner membrane. The catalysed reaction is fluoride(in) = fluoride(out). Its activity is regulated as follows. Na(+) is not transported, but it plays an essential structural role and its presence is essential for fluoride channel function. In terms of biological role, fluoride-specific ion channel. Important for reducing fluoride concentration in the cell, thus reducing its toxicity. The chain is Fluoride-specific ion channel FluC from Cupriavidus necator (strain ATCC 17699 / DSM 428 / KCTC 22496 / NCIMB 10442 / H16 / Stanier 337) (Ralstonia eutropha).